We begin with the raw amino-acid sequence, 423 residues long: Gamma-glutamyl phosphate reductase (423 aa).

The protein belongs to the gamma-glutamyl phosphate reductase family.

The protein resides in the cytoplasm. It carries out the reaction L-glutamate 5-semialdehyde + phosphate + NADP(+) = L-glutamyl 5-phosphate + NADPH + H(+). It functions in the pathway amino-acid biosynthesis; L-proline biosynthesis; L-glutamate 5-semialdehyde from L-glutamate: step 2/2. Functionally, catalyzes the NADPH-dependent reduction of L-glutamate 5-phosphate into L-glutamate 5-semialdehyde and phosphate. The product spontaneously undergoes cyclization to form 1-pyrroline-5-carboxylate. The sequence is that of Gamma-glutamyl phosphate reductase from Burkholderia ambifaria (strain ATCC BAA-244 / DSM 16087 / CCUG 44356 / LMG 19182 / AMMD) (Burkholderia cepacia (strain AMMD)).